The chain runs to 173 residues: 6,7-dimethyl-8-ribityllumazine synthase (173 aa).

Residues F24, 58-60 (ALE), and 82-84 (AVI) contribute to the 5-amino-6-(D-ribitylamino)uracil site. 87–88 (ET) lines the (2S)-2-hydroxy-3-oxobutyl phosphate pocket. The active-site Proton donor is the H90. 5-amino-6-(D-ribitylamino)uracil is bound at residue N115. R129 serves as a coordination point for (2S)-2-hydroxy-3-oxobutyl phosphate. Residues 150-173 (TLDQLSDDEEDEEDEDDEDEEERA) are disordered. The span at 154–173 (LSDDEEDEEDEDDEDEEERA) shows a compositional bias: acidic residues.

Belongs to the DMRL synthase family.

It carries out the reaction (2S)-2-hydroxy-3-oxobutyl phosphate + 5-amino-6-(D-ribitylamino)uracil = 6,7-dimethyl-8-(1-D-ribityl)lumazine + phosphate + 2 H2O + H(+). It participates in cofactor biosynthesis; riboflavin biosynthesis; riboflavin from 2-hydroxy-3-oxobutyl phosphate and 5-amino-6-(D-ribitylamino)uracil: step 1/2. In terms of biological role, catalyzes the formation of 6,7-dimethyl-8-ribityllumazine by condensation of 5-amino-6-(D-ribitylamino)uracil with 3,4-dihydroxy-2-butanone 4-phosphate. This is the penultimate step in the biosynthesis of riboflavin. In Burkholderia mallei (strain NCTC 10247), this protein is 6,7-dimethyl-8-ribityllumazine synthase.